The chain runs to 84 residues: uncharacterized protein (84 aa).

This is an uncharacterized protein from Dictyostelium discoideum (Social amoeba).